We begin with the raw amino-acid sequence, 201 residues long: Peptide deformylase (201 aa).

The disordered stretch occupies residues M1–E24. The Fe cation site is built by C121 and H163. E164 is a catalytic residue. Residue H167 participates in Fe cation binding.

Belongs to the polypeptide deformylase family. It depends on Fe(2+) as a cofactor.

The enzyme catalyses N-terminal N-formyl-L-methionyl-[peptide] + H2O = N-terminal L-methionyl-[peptide] + formate. Its function is as follows. Removes the formyl group from the N-terminal Met of newly synthesized proteins. Requires at least a dipeptide for an efficient rate of reaction. N-terminal L-methionine is a prerequisite for activity but the enzyme has broad specificity at other positions. The sequence is that of Peptide deformylase from Prochlorococcus marinus (strain MIT 9312).